The sequence spans 712 residues: Secretin OutD (712 aa).

The signal sequence occupies residues 1–27; it reads MLGKGIKKSWGWLGLTVLLLGSPCGWA. Residues 28 to 124 are N0; the sequence is AEFSASFKGT…LANNEQPGVG (97 aa). Residues 126–190 form an N1 region; it reads ELVTRVVPLN…DIVNTVDKTG (65 aa). Residues 191 to 264 form an N2 region; it reads DREMITVSLN…MIRQLDRKQV (74 aa). Residues 267-394 are N3; sequence GGTKVIYLKY…DLEQVINQLD (128 aa). The segment at 288-342 is disordered; the sequence is GNGTSGNRNSSSTNSSRPSSTRSSSTLNNSNSSSSGSSSGSGSSSSSSSSSMGFG. Residues 399 to 651 form a secretin region; it reads QVLVEAIIAE…LFLRPTIIRD (253 aa). The s domain stretch occupies residues 653-712; the sequence is QQYQQASISKYNSFNNEQQQQRGQGNSVLDNNTLRLSGGNTYTFRQVQSSISAFYQPEGR.

This sequence belongs to the bacterial secretin family. GSP D subfamily. In terms of assembly, forms a cylindrical channel with 15 subunits.

Its subcellular location is the cell outer membrane. In terms of biological role, involved in a type II secretion system (T2SS, formerly general secretion pathway, GSP) for the export of proteins. Required for the translocation of the multiple pectic enzymes. This subunit forms the outer membrane channel. The sequence is that of Secretin OutD (outD) from Dickeya chrysanthemi (Pectobacterium chrysanthemi).